We begin with the raw amino-acid sequence, 1279 residues long: Cellulose synthase operon protein C (1279 aa).

The first 21 residues, 1–21 (MRRHTLAIAILAALASTASVA), serve as a signal peptide directing secretion. TPR repeat units lie at residues 27 to 60 (QSLL…SPDQ), 62 to 94 (DALY…SPVP), 218 to 250 (ADET…HPDD), 306 to 339 (VDAL…PGGA), 384 to 417 (PGAA…HPGD), 460 to 493 (ALRA…DPEN), 495 to 527 (WTRF…QPNQ), 606 to 639 (PERV…NPNP), 719 to 752 (ALGV…NPNN), and 787 to 820 (PEIL…ENAM).

It participates in glycan metabolism; bacterial cellulose biosynthesis. Functionally, required for maximal bacterial cellulose synthesis. The protein is Cellulose synthase operon protein C (bscS) of Pseudomonas fluorescens (strain SBW25).